Reading from the N-terminus, the 486-residue chain is Ribosomal RNA small subunit methyltransferase F (486 aa).

S-adenosyl-L-methionine-binding positions include 124–130 (ASAPGSK), E148, D175, and D193. Catalysis depends on C246, which acts as the Nucleophile.

Belongs to the class I-like SAM-binding methyltransferase superfamily. RsmB/NOP family.

It is found in the cytoplasm. It catalyses the reaction cytidine(1407) in 16S rRNA + S-adenosyl-L-methionine = 5-methylcytidine(1407) in 16S rRNA + S-adenosyl-L-homocysteine + H(+). Its function is as follows. Specifically methylates the cytosine at position 1407 (m5C1407) of 16S rRNA. This Shewanella baltica (strain OS155 / ATCC BAA-1091) protein is Ribosomal RNA small subunit methyltransferase F.